A 313-amino-acid polypeptide reads, in one-letter code: Methionyl-tRNA formyltransferase (313 aa).

113–116 contacts (6S)-5,6,7,8-tetrahydrofolate; the sequence is SLLP.

The protein belongs to the Fmt family.

It carries out the reaction L-methionyl-tRNA(fMet) + (6R)-10-formyltetrahydrofolate = N-formyl-L-methionyl-tRNA(fMet) + (6S)-5,6,7,8-tetrahydrofolate + H(+). Its function is as follows. Attaches a formyl group to the free amino group of methionyl-tRNA(fMet). The formyl group appears to play a dual role in the initiator identity of N-formylmethionyl-tRNA by promoting its recognition by IF2 and preventing the misappropriation of this tRNA by the elongation apparatus. This Francisella tularensis subsp. holarctica (strain FTNF002-00 / FTA) protein is Methionyl-tRNA formyltransferase.